The following is a 671-amino-acid chain: MTDRRRSMSCVHFFPLKSRGFLPTLTSKKRSVKLSKQDATVTVVILLLILLLGWGYSRALRLSQGKGNPIGRVFFYKKTATRKKNNQALWLKLKDGVPVYHRDVLRTTTGSEAVIVFTDNSRLDIAENTMVRISHTGMKKKDVRLVTGAIRYARAAGNPAAHTVHVGKTTISLSGDGQVNVRGGERDSTVEIARGEALLHDAQGQTLPLQTFTQLATSREDGTVRILHPTFVPLLPDQDALLLTAEHTRSVGFVWLGDATTVQPSVRLQISRYADFSVIETERKLTLPHEANASRTTFKTSERLGEGRWFWRLVPQNGTASAPRSFSVRRARKVMLHTPRAQAVLSYRDAIPPTLFSWTSVEDVEQYRLLLSSRADFSADVKTFSLRTPEISVPGLGEGTYFWKVVPRFDEGIEDPVFASEVGTFSIKQGKELHAPVALFPAEDEVLEHADRENRMVIFTCEPIPEARRYVWTVKNMDANASPLVTTTSVPFLTVPMRSLRARLQEGTYQWQVAWETRRSDRSPYSALRAFTVIEGMHAWEEEPETRDLIALRAPSFVLRDMPALITEKYLLQHRALRCKWTAVHNAQRYTVTLKNKKTDAVLQTATTTGVEFSFTNLAHLEEGSFHWVIQAHTEQEGYEPASAQVVRAFTIRVSELERPRAKEIVHYEYH.

The helical transmembrane segment at 39–56 threads the bilayer; sequence ATVTVVILLLILLLGWGY.

The protein localises to the membrane. This is an uncharacterized protein from Treponema pallidum (strain Nichols).